The following is a 393-amino-acid chain: Succinate--CoA ligase [ADP-forming] subunit beta (393 aa).

Positions 9–245 (KMLFAQYGIP…PSQEDKCETY (237 aa)) constitute an ATP-grasp domain. ATP is bound by residues K46, 53-55 (GRG), E99, I102, and E107. Residues N200 and D214 each coordinate Mg(2+). Substrate contacts are provided by residues N265 and 322-324 (GIV).

Belongs to the succinate/malate CoA ligase beta subunit family. Heterotetramer of two alpha and two beta subunits. Requires Mg(2+) as cofactor.

The enzyme catalyses succinate + ATP + CoA = succinyl-CoA + ADP + phosphate. It carries out the reaction GTP + succinate + CoA = succinyl-CoA + GDP + phosphate. Its pathway is carbohydrate metabolism; tricarboxylic acid cycle; succinate from succinyl-CoA (ligase route): step 1/1. In terms of biological role, succinyl-CoA synthetase functions in the citric acid cycle (TCA), coupling the hydrolysis of succinyl-CoA to the synthesis of either ATP or GTP and thus represents the only step of substrate-level phosphorylation in the TCA. The beta subunit provides nucleotide specificity of the enzyme and binds the substrate succinate, while the binding sites for coenzyme A and phosphate are found in the alpha subunit. The chain is Succinate--CoA ligase [ADP-forming] subunit beta from Baumannia cicadellinicola subsp. Homalodisca coagulata.